The chain runs to 62 residues: uncharacterized protein (62 aa).

Residues 1 to 13 show a composition bias toward polar residues; it reads MGESKSPQESSSE. The disordered stretch occupies residues 1-62; the sequence is MGESKSPQES…SRREFRRKSG (62 aa). Positions 14–28 are enriched in basic and acidic residues; the sequence is GETKRKFREALDRKM.

This is an uncharacterized protein from Mycobacterium tuberculosis (strain ATCC 25618 / H37Rv).